The following is a 406-amino-acid chain: S-adenosylmethionine synthase (406 aa).

An ATP-binding site is contributed by His16. Mg(2+) is bound at residue Asp18. Glu44 provides a ligand contact to K(+). The L-methionine site is built by Glu57 and Gln100. The flexible loop stretch occupies residues Gln100–Arg110. Residues Asp165–Lys167, Asp241, Arg247–Lys248, Ala264, and Lys268 contribute to the ATP site. Asp241 lines the L-methionine pocket. Position 272 (Lys272) interacts with L-methionine.

It belongs to the AdoMet synthase family. As to quaternary structure, homotetramer; dimer of dimers. It depends on Mg(2+) as a cofactor. Requires K(+) as cofactor.

It is found in the cytoplasm. It catalyses the reaction L-methionine + ATP + H2O = S-adenosyl-L-methionine + phosphate + diphosphate. The protein operates within amino-acid biosynthesis; S-adenosyl-L-methionine biosynthesis; S-adenosyl-L-methionine from L-methionine: step 1/1. Catalyzes the formation of S-adenosylmethionine (AdoMet) from methionine and ATP. The overall synthetic reaction is composed of two sequential steps, AdoMet formation and the subsequent tripolyphosphate hydrolysis which occurs prior to release of AdoMet from the enzyme. The chain is S-adenosylmethionine synthase from Chromohalobacter salexigens (strain ATCC BAA-138 / DSM 3043 / CIP 106854 / NCIMB 13768 / 1H11).